The chain runs to 474 residues: tRNA-2-methylthio-N(6)-dimethylallyladenosine synthase (474 aa).

Residues 3–120 (KKLHIKTWGC…LPEMINSVRG (118 aa)) enclose the MTTase N-terminal domain. [4Fe-4S] cluster contacts are provided by Cys-12, Cys-49, Cys-83, Cys-157, Cys-161, and Cys-164. A Radical SAM core domain is found at 143–378 (RADGPSAFVS…INQQVTAWSR (236 aa)). Positions 378-441 (RRMLGTTQRI…TNSMRGKVVR (64 aa)) constitute a TRAM domain.

This sequence belongs to the methylthiotransferase family. MiaB subfamily. As to quaternary structure, monomer. [4Fe-4S] cluster serves as cofactor.

The protein resides in the cytoplasm. It carries out the reaction N(6)-dimethylallyladenosine(37) in tRNA + (sulfur carrier)-SH + AH2 + 2 S-adenosyl-L-methionine = 2-methylsulfanyl-N(6)-dimethylallyladenosine(37) in tRNA + (sulfur carrier)-H + 5'-deoxyadenosine + L-methionine + A + S-adenosyl-L-homocysteine + 2 H(+). In terms of biological role, catalyzes the methylthiolation of N6-(dimethylallyl)adenosine (i(6)A), leading to the formation of 2-methylthio-N6-(dimethylallyl)adenosine (ms(2)i(6)A) at position 37 in tRNAs that read codons beginning with uridine. In Enterobacter sp. (strain 638), this protein is tRNA-2-methylthio-N(6)-dimethylallyladenosine synthase.